A 324-amino-acid chain; its full sequence is Phosphate transport system permease protein PstC 2 (324 aa).

The next 6 helical transmembrane spans lie at 30-50 (ASAA…FLLV), 90-110 (LSSI…AVFL), 125-145 (MVDL…IFVL), 174-194 (AGGG…LPIV), 237-257 (VAAS…VLVI), and 290-310 (PLPT…TFLV). Positions 85-314 (FMVTALSSIT…VLTFLVNAAA (230 aa)) constitute an ABC transmembrane type-1 domain.

The protein belongs to the binding-protein-dependent transport system permease family. CysTW subfamily.

The protein localises to the cell membrane. In terms of biological role, part of the binding-protein-dependent transport system for phosphate; probably responsible for the translocation of the substrate across the membrane. This chain is Phosphate transport system permease protein PstC 2 (pstC2), found in Mycobacterium bovis (strain ATCC BAA-935 / AF2122/97).